We begin with the raw amino-acid sequence, 162 residues long: Protein-export protein SecB (162 aa).

Belongs to the SecB family. As to quaternary structure, homotetramer, a dimer of dimers. One homotetramer interacts with 1 SecA dimer.

Its subcellular location is the cytoplasm. Its function is as follows. One of the proteins required for the normal export of preproteins out of the cell cytoplasm. It is a molecular chaperone that binds to a subset of precursor proteins, maintaining them in a translocation-competent state. It also specifically binds to its receptor SecA. The sequence is that of Protein-export protein SecB from Pseudomonas savastanoi pv. phaseolicola (strain 1448A / Race 6) (Pseudomonas syringae pv. phaseolicola (strain 1448A / Race 6)).